Here is an 86-residue protein sequence, read N- to C-terminus: Small ribosomal subunit protein uS15c (86 aa).

The protein belongs to the universal ribosomal protein uS15 family. Part of the 30S ribosomal subunit.

Its subcellular location is the plastid. The protein localises to the chloroplast. The chain is Small ribosomal subunit protein uS15c (rps15) from Cryptomeria japonica (Japanese cedar).